Consider the following 608-residue polypeptide: Afamin (608 aa).

An N-terminal signal peptide occupies residues 1–21 (MRHLKLTGFIFFLLPLTESLA). Albumin domains follow at residues 22–210 (LPTK…APIT), 211–403 (QYLK…KFNE), and 404–599 (TTQR…KTGD). N33 carries N-linked (GlcNAc...) asparagine glycosylation. Disulfide bonds link C77–C86, C99–C114, C113–C124, C148–C193, C192–C201, C224–C270, C269–C277, C289–C303, C302–C313, C340–C385, and C384–C393. A glycan (N-linked (GlcNAc...) asparagine) is linked at N109. N-linked (GlcNAc...) asparagine glycosylation is present at N153. The tract at residues 215–319 (ASSSYQRNVC…REACIINANK (105 aa)) is binding pocket for hydrophobic ligands. N-linked (GlcNAc...) asparagine glycosylation occurs at N402. 5 disulfide bridges follow: C416-C462, C461-C470, C483-C499, C498-C509, and C580-C589. Residue N488 is glycosylated (N-linked (GlcNAc...) asparagine). Positions 583-608 (VQEPESCFSPESSKTGDESQATEKQR) are disordered. Residues 596-608 (KTGDESQATEKQR) are compositionally biased toward basic and acidic residues.

This sequence belongs to the ALB/AFP/VDB family. Forms a 1:1 complex with Wnt family members; interacts with WNT1, WNT2B, WNT3, WNT5A, WNT7A, WNT7B, WNT8, WNT9A, WNT9B, WNT10A and WNT10B. Interacts with WNT3A. In terms of processing, N-glycosylated; more than 90% of the glycans are sialylated. In terms of tissue distribution, detected in brain, especially on brain capillaries (at protein level). Expressed in isolated brain capillaries.

The protein localises to the secreted. Functionally, functions as a carrier for hydrophobic molecules in body fluids. Essential for the solubility and activity of lipidated Wnt family members, including WNT1, WNT2B, WNT3, WNT3A, WNT5A, WNT7A, WNT7B, WNT8, WNT9A, WNT9B, WNT10A and WNT10B. Binds vitamin E. May transport vitamin E in body fluids under conditions where the lipoprotein system is not sufficient. May be involved in the transport of vitamin E across the blood-brain barrier. The sequence is that of Afamin (Afm) from Mus musculus (Mouse).